Here is a 313-residue protein sequence, read N- to C-terminus: Dihydroorotate dehydrogenase B (NAD(+)), catalytic subunit (313 aa).

FMN-binding positions include S21 and 45–46 (KA). Substrate is bound by residues K45 and 69-73 (NAIGL). N99 and N127 together coordinate FMN. A substrate-binding site is contributed by N127. C130 (nucleophile) is an active-site residue. Position 191 (I191) interacts with FMN. 192 to 193 (NT) is a binding site for substrate. Residues G217, 243–244 (GG), and 265–266 (GT) contribute to the FMN site.

The protein belongs to the dihydroorotate dehydrogenase family. Type 1 subfamily. As to quaternary structure, heterotetramer of 2 PyrK and 2 PyrD type B subunits. Requires FMN as cofactor.

Its subcellular location is the cytoplasm. The enzyme catalyses (S)-dihydroorotate + NAD(+) = orotate + NADH + H(+). Its pathway is pyrimidine metabolism; UMP biosynthesis via de novo pathway; orotate from (S)-dihydroorotate (NAD(+) route): step 1/1. In terms of biological role, catalyzes the conversion of dihydroorotate to orotate with NAD(+) as electron acceptor. In Bacillus caldolyticus, this protein is Dihydroorotate dehydrogenase B (NAD(+)), catalytic subunit (pyrD).